We begin with the raw amino-acid sequence, 1090 residues long: UPF0507 protein C1Q_01007 (1090 aa).

The VPS9 domain maps to 289-436; it reads FSVNQLLTDF…FEDFNKNTGN (148 aa).

This sequence belongs to the UPF0507 family.

The chain is UPF0507 protein C1Q_01007 from Saccharomyces cerevisiae (strain JAY291) (Baker's yeast).